Here is a 434-residue protein sequence, read N- to C-terminus: CinA-like protein (434 aa).

The protein belongs to the CinA family.

The sequence is that of CinA-like protein from Mycolicibacterium paratuberculosis (strain ATCC BAA-968 / K-10) (Mycobacterium paratuberculosis).